The primary structure comprises 20 residues: Poneritoxin (20 aa).

Methionine 18 carries the methionine sulfoxide; in form U1-PONTX-Dq3c modification. Lysine 19 carries the lysine amide; in form U1-PONTX-Dq3a and U1-PONTX-Dq3c modification.

Post-translationally, the peptide spanning residues 2 to 19 occurs in 3 forms and has been given 3 different names. U1-PONTX-Dq3a has an amidated Lys-19, U1-PONTX-Dq3c has an amidated Lys-19 and an oxidized Met-18, and U1-PONTX-Dq3b has no modifications at either Met-18 or Lys-19. In terms of tissue distribution, expressed by the venom gland.

It is found in the secreted. Its function is as follows. May have antimicrobial properties, like most ant linear peptides. This is Poneritoxin from Dinoponera quadriceps (South American ant).